A 296-amino-acid chain; its full sequence is tRNA dimethylallyltransferase (296 aa).

ATP is bound at residue 2–9; that stretch reads GPTASGKT. Residue 4–9 participates in substrate binding; that stretch reads TASGKT. Interaction with substrate tRNA regions lie at residues 27–30, 151–155, and 232–237; these read DSAL, QRLSR, and RCVGYR.

The protein belongs to the IPP transferase family. As to quaternary structure, monomer. It depends on Mg(2+) as a cofactor.

The enzyme catalyses adenosine(37) in tRNA + dimethylallyl diphosphate = N(6)-dimethylallyladenosine(37) in tRNA + diphosphate. In terms of biological role, catalyzes the transfer of a dimethylallyl group onto the adenine at position 37 in tRNAs that read codons beginning with uridine, leading to the formation of N6-(dimethylallyl)adenosine (i(6)A). The chain is tRNA dimethylallyltransferase from Shewanella baltica (strain OS155 / ATCC BAA-1091).